Reading from the N-terminus, the 63-residue chain is Cytochrome c oxidase subunit 7C, mitochondrial (63 aa).

The transit peptide at 1-16 (MLGQSIRRFTTSVVRR) directs the protein to the mitochondrion. At 17–33 (SHYEEGPGKNLPFSVEN) the chain is on the mitochondrial matrix side. N6-acetyllysine; alternate is present on Lys25. The residue at position 25 (Lys25) is an N6-succinyllysine; alternate. A helical membrane pass occupies residues 34–60 (KWSLLAKMCLYFGSAFATPFLIVRHQL). The Mitochondrial intermembrane portion of the chain corresponds to 61-63 (LKT).

It belongs to the cytochrome c oxidase VIIc family. As to quaternary structure, component of the cytochrome c oxidase (complex IV, CIV), a multisubunit enzyme composed of 14 subunits. The complex is composed of a catalytic core of 3 subunits MT-CO1, MT-CO2 and MT-CO3, encoded in the mitochondrial DNA, and 11 supernumerary subunits COX4I, COX5A, COX5B, COX6A, COX6B, COX6C, COX7A, COX7B, COX7C, COX8 and NDUFA4, which are encoded in the nuclear genome. The complex exists as a monomer or a dimer and forms supercomplexes (SCs) in the inner mitochondrial membrane with NADH-ubiquinone oxidoreductase (complex I, CI) and ubiquinol-cytochrome c oxidoreductase (cytochrome b-c1 complex, complex III, CIII), resulting in different assemblies (supercomplex SCI(1)III(2)IV(1) and megacomplex MCI(2)III(2)IV(2)). Interacts with RAB5IF.

Its subcellular location is the mitochondrion inner membrane. It participates in energy metabolism; oxidative phosphorylation. Component of the cytochrome c oxidase, the last enzyme in the mitochondrial electron transport chain which drives oxidative phosphorylation. The respiratory chain contains 3 multisubunit complexes succinate dehydrogenase (complex II, CII), ubiquinol-cytochrome c oxidoreductase (cytochrome b-c1 complex, complex III, CIII) and cytochrome c oxidase (complex IV, CIV), that cooperate to transfer electrons derived from NADH and succinate to molecular oxygen, creating an electrochemical gradient over the inner membrane that drives transmembrane transport and the ATP synthase. Cytochrome c oxidase is the component of the respiratory chain that catalyzes the reduction of oxygen to water. Electrons originating from reduced cytochrome c in the intermembrane space (IMS) are transferred via the dinuclear copper A center (CU(A)) of subunit 2 and heme A of subunit 1 to the active site in subunit 1, a binuclear center (BNC) formed by heme A3 and copper B (CU(B)). The BNC reduces molecular oxygen to 2 water molecules using 4 electrons from cytochrome c in the IMS and 4 protons from the mitochondrial matrix. The polypeptide is Cytochrome c oxidase subunit 7C, mitochondrial (COX7C) (Pongo pygmaeus (Bornean orangutan)).